Consider the following 88-residue polypeptide: MGFTDETVRFRLDDSNKVEISETLTAVYRSLEEKGYNPINQIVGYVLSGDPAYVPRYNDARNQIRKYERDEIVEELVRYYLQGNGIDL.

It belongs to the UPF0297 family.

The polypeptide is UPF0297 protein SAK_2030 (Streptococcus agalactiae serotype Ia (strain ATCC 27591 / A909 / CDC SS700)).